We begin with the raw amino-acid sequence, 298 residues long: Protein pxr1 (298 aa).

The span at 1–11 shows a compositional bias: basic residues; the sequence is MGLAAPRKRTK. The tract at residues 1–23 is disordered; the sequence is MGLAAPRKRTKISHDPNNTNWAR. One can recognise a G-patch domain in the interval 25-79; that stretch reads TSGFGHKILSSQGWTPGSFLGARDAAHADMFTAASAGHIRVVVKDDTLGLGARAG. The disordered stretch occupies residues 145-274; the sequence is LPERESVQQS…RPLGRQIVRG (130 aa). Residues 151 to 164 are compositionally biased toward polar residues; it reads VQQSRAAVETSDSN. Positions 199 to 222 are enriched in basic residues; sequence REKKEKKDKKEKKEKKDKKDKKRK. Over residues 247-256 the composition is skewed to polar residues; the sequence is GLESDSTSVS.

Belongs to the PINX1 family.

Its subcellular location is the nucleus. It is found in the nucleolus. Its function is as follows. Involved in rRNA-processing at A0, A1 and A2 sites and negatively regulates telomerase. The polypeptide is Protein pxr1 (pxr1) (Aspergillus terreus (strain NIH 2624 / FGSC A1156)).